The following is a 375-amino-acid chain: MAKRDYYEILGVSKTAEEREIKKAYKRLAMKYHPDRNQGDKEAEAKFKEIKEAYEVLTDAQKRAAYDQYGHAAFEQGGMGGGFNGGADFSDIFGDVFGDIFGGGRGRQRAARGADLRYNMDLTLEEAVRGVTKEIRIPTLEECDVCHGSGAKAGTQPQTCPTCHGSGQVQMRQGFFAVQQTCPHCQGRGTLIKDPCHKCHGHGRVEKSKTLSVKIPAGVDTGDRIRLAGEGEAGEHGAPAGDLYVQVQVKQHPIFEREGNNLYCEVPINFAMAALGGEIEVPTLDGRVMLKVPSETQTGKLFRMRGKGVKSVRGGAQGDLLCRVVVETPVGLSEKQKQLLKDLQESFGGPTGEKNSPRSKSFFDGVKKFFDDLTR.

The region spanning 5–70 is the J domain; sequence DYYEILGVSK…QKRAAYDQYG (66 aa). The segment at 130 to 208 adopts a CR-type zinc-finger fold; that stretch reads GVTKEIRIPT…CHGHGRVEKS (79 aa). Positions 143, 146, 160, 163, 182, 185, 196, and 199 each coordinate Zn(2+). CXXCXGXG motif repeat units lie at residues 143–150, 160–167, 182–189, and 196–203; these read CDVCHGSG, CPTCHGSG, CPHCQGRG, and CHKCHGHG.

It belongs to the DnaJ family. As to quaternary structure, homodimer. The cofactor is Zn(2+).

The protein localises to the cytoplasm. In terms of biological role, participates actively in the response to hyperosmotic and heat shock by preventing the aggregation of stress-denatured proteins and by disaggregating proteins, also in an autonomous, DnaK-independent fashion. Unfolded proteins bind initially to DnaJ; upon interaction with the DnaJ-bound protein, DnaK hydrolyzes its bound ATP, resulting in the formation of a stable complex. GrpE releases ADP from DnaK; ATP binding to DnaK triggers the release of the substrate protein, thus completing the reaction cycle. Several rounds of ATP-dependent interactions between DnaJ, DnaK and GrpE are required for fully efficient folding. Also involved, together with DnaK and GrpE, in the DNA replication of plasmids through activation of initiation proteins. This is Chaperone protein DnaJ from Salmonella paratyphi A (strain ATCC 9150 / SARB42).